A 602-amino-acid polypeptide reads, in one-letter code: MASVEGDDDFGSSSSRSYQDQLYTELWKVCAGPLVEVPRAQERVFYFPQGHMEQLVASTNQGINSEEIPVFDLPPKILCRVLDVTLKAEHETDEVYAQITLQPEEDQSEPTSLDPPIVGPTKQEFHSFVKILTASDTSTHGGFSVLRKHATECLPSLDMTQATPTQELVTRDLHGFEWRFKHIFRGQPRRHLLTTGWSTFVSSKRLVAGDAFVFLRGENGDLRVGVRRLARHQSTMPTSVISSQSMHLGVLATASHAVRTTTIFVVFYKPRISQFIVGVNKYMEAIKHGFSLGTRFRMRFEGEESPERIFTGTIVGSGDLSSQWPASKWRSLQVQWDEPTTVQRPDKVSPWEIEPFLATSPISTPAQQPQSKCKRSRPIEPSVKTPAPPSFLYSLPQSQDSINASLKLFQDPSLERISGGYSSNNSFKPETPPPPTNCSYRLFGFDLTSNSPAPIPQDKQPMDTCGAAKCQEPITPTSMSEQKKQQTSRSRTKVQMQGIAVGRAVDLTLLKSYDELIDELEEMFEIQGQLLARDKWIVVFTDDEGDMMLAGDDPWNEFCKMAKKIFIYSSDEVKKMTTKLKISSSLENEEYGNESFENRSRG.

Residues 128–230 (FVKILTASDT…DLRVGVRRLA (103 aa)) constitute a DNA-binding region (TF-B3). Residues 359-396 (TSPISTPAQQPQSKCKRSRPIEPSVKTPAPPSFLYSLP) form a disordered region. Residues 360-371 (SPISTPAQQPQS) are compositionally biased toward polar residues. The PB1 domain maps to 489 to 581 (RSRTKVQMQG…EVKKMTTKLK (93 aa)).

It belongs to the ARF family. As to quaternary structure, homodimers and heterodimers.

It localises to the nucleus. Auxin response factors (ARFs) are transcriptional factors that bind specifically to the DNA sequence 5'-TGTCTC-3' found in the auxin-responsive promoter elements (AuxREs). Could act as transcriptional activator or repressor. Formation of heterodimers with Aux/IAA proteins may alter their ability to modulate early auxin response genes expression. The sequence is that of Auxin response factor 18 (ARF18) from Arabidopsis thaliana (Mouse-ear cress).